A 378-amino-acid polypeptide reads, in one-letter code: Quinolinate synthase (378 aa).

2 residues coordinate iminosuccinate: His59 and Ser80. Cys125 is a binding site for [4Fe-4S] cluster. Iminosuccinate contacts are provided by residues 151–153 and Ser168; that span reads YAN. Residue Cys212 coordinates [4Fe-4S] cluster. Residues 238–240 and Thr255 contribute to the iminosuccinate site; that span reads HPE. [4Fe-4S] cluster is bound at residue Cys309.

Belongs to the quinolinate synthase family. Type 1 subfamily. Requires [4Fe-4S] cluster as cofactor.

The protein localises to the cytoplasm. The catalysed reaction is iminosuccinate + dihydroxyacetone phosphate = quinolinate + phosphate + 2 H2O + H(+). The protein operates within cofactor biosynthesis; NAD(+) biosynthesis; quinolinate from iminoaspartate: step 1/1. Its function is as follows. Catalyzes the condensation of iminoaspartate with dihydroxyacetone phosphate to form quinolinate. The protein is Quinolinate synthase of Burkholderia thailandensis (strain ATCC 700388 / DSM 13276 / CCUG 48851 / CIP 106301 / E264).